The chain runs to 174 residues: Inactive signal peptidase IA (174 aa).

At 1–7 (MKKVVKY) the chain is on the cytoplasmic side. Residues 8-28 (LISLILAIIIVLFVQTFVIVG) traverse the membrane as a helical segment. At 29-174 (HVIPNNDMSP…FSKWTIQFKS (146 aa)) the chain is on the extracellular side.

This sequence belongs to the peptidase S26 family.

The protein resides in the cell membrane. Functionally, catalytically inactive. This chain is Inactive signal peptidase IA (spsA), found in Staphylococcus aureus (strain Mu50 / ATCC 700699).